We begin with the raw amino-acid sequence, 349 residues long: Farnesyl pyrophosphate synthase vrtD (349 aa).

Residues K53, R56, and Q92 each contribute to the isopentenyl diphosphate site. Residues D99 and D103 each coordinate Mg(2+). R108 contacts dimethylallyl diphosphate. R109 contributes to the isopentenyl diphosphate binding site. Positions 196, 197, 236, 253, and 262 each coordinate dimethylallyl diphosphate.

The protein belongs to the FPP/GGPP synthase family. Requires Mg(2+) as cofactor.

The enzyme catalyses isopentenyl diphosphate + dimethylallyl diphosphate = (2E)-geranyl diphosphate + diphosphate. It catalyses the reaction isopentenyl diphosphate + (2E)-geranyl diphosphate = (2E,6E)-farnesyl diphosphate + diphosphate. Its pathway is secondary metabolite biosynthesis; terpenoid biosynthesis. In terms of biological role, farnesyl pyrophosphate synthase; part of the gene cluster that mediates the biosynthesis of viridicatumtoxin, a tetracycline-like fungal meroterpenoid with a unique, fused spirobicyclic ring system. The first step of the pathway is the production of the malonamoyl-CoA starter unit for the polyketide synthase vrtA. The aldolase vrtJ may be involved in the synthesis of the malonamate substrate for malonamoyl-CoA synthetase vrtB. The polyketide synthase vrtA then may utilize the malonamoyl-CoA starter unit, followed by sequential condensation of eight malonyl-CoA units to form the polyketide backbone. The cyclization of the last ring could be mediated by the lactamase-like protein vrtG. The proposed post-PKS tailoring steps are a hydroxylation at C5 catalyzed the cytochrome P450 monooxygenase vrtE, a hydroxylation at C12a catalyzed by VrtH and/or VrtI, and an O-methylation by the O-methyltransferase vrtF. VrtC is then proposed to catalyze the transfer of a geranyl group synthesized by vrtD to the aromatic C ring of the tetracyclic polyketide intermediate of viridicatumtoxin to yield previridicatumtoxin. Finally, the cytochrome P450 monooxygenase vrtK catalyzes the spirocyclization of the geranyl moiety of previridicatumtoxin to afford viridicatumtoxin. In Penicillium aethiopicum, this protein is Farnesyl pyrophosphate synthase vrtD.